A 488-amino-acid chain; its full sequence is Tocopherol cyclase, chloroplastic (488 aa).

Residues 1–76 (MEIRSLIVSM…VPTSPNRELR (76 aa)) constitute a chloroplast transit peptide.

The protein resides in the plastid. It localises to the chloroplast. Its subcellular location is the plastoglobule. It catalyses the reaction delta-tocopherol = 2-methyl-6-phytyl-1,4-benzene-1,4-diol. It carries out the reaction gamma-tocopherol = 2,3-dimethyl-6-phytylbenzene-1,4-diol. The enzyme catalyses delta-tocotrienol = 6-geranylgeranyl-2-methylbenzene-1,4-diol. The catalysed reaction is gamma-tocotrienol = 6-geranylgeranyl-2,3-dimethylbenzene-1,4-diol. Its pathway is cofactor biosynthesis; tocopherol biosynthesis. Functionally, involved in the synthesis of both tocopherols and tocotrienols (vitamin E), which presumably protect photosynthetic complexes from oxidative stress. Catalyzes the conversion of 2-methyl-6-phytyl-1,4-hydroquinone and 2,3-dimethyl-5-phytyl-1,4-hydroquinone (DMPQ) to delta- and gamma-tocopherol respectively. Also converts 2,3-dimethyl-5-geranylgeranyl-1,4-hydroquinone (DMGQ) to gamma-tocotrienol. The polypeptide is Tocopherol cyclase, chloroplastic (VTE1) (Arabidopsis thaliana (Mouse-ear cress)).